We begin with the raw amino-acid sequence, 482 residues long: Putative L-cysteine desulfhydrase 1 (482 aa).

Positions 1-10 (MASIPPDDDA) are enriched in acidic residues. The disordered stretch occupies residues 1–45 (MASIPPDDDAAAAAAAGAAENGYGNGKGNGNGPAPRPPPAKRPRS). Positions 11–22 (AAAAAAGAAENG) are enriched in low complexity. Lys276 is subject to N6-(pyridoxal phosphate)lysine.

It belongs to the class-V pyridoxal-phosphate-dependent aminotransferase family. It depends on pyridoxal 5'-phosphate as a cofactor.

It catalyses the reaction L-cysteine + H2O = hydrogen sulfide + pyruvate + NH4(+) + H(+). Its function is as follows. Catalyzes the production of hydrogen sulfide (H2S) from cysteine. This is Putative L-cysteine desulfhydrase 1 from Oryza sativa subsp. japonica (Rice).